The chain runs to 241 residues: Uridylate kinase (241 aa).

ATP-binding positions include 10 to 13 (KLSG), Gly-53, and Arg-57. Residues Asp-72 and 133–140 (AGSPYFST) each bind UMP. Positions 161, 167, and 170 each coordinate ATP.

The protein belongs to the UMP kinase family. In terms of assembly, homohexamer.

The protein localises to the cytoplasm. It carries out the reaction UMP + ATP = UDP + ADP. It functions in the pathway pyrimidine metabolism; CTP biosynthesis via de novo pathway; UDP from UMP (UMPK route): step 1/1. Inhibited by UTP. Catalyzes the reversible phosphorylation of UMP to UDP. This is Uridylate kinase from Aster yellows witches'-broom phytoplasma (strain AYWB).